The primary structure comprises 148 residues: MKEVSVPAIKRIVLIAHDNRKEDLVNWVKTHREILSKHQLYGTGTTGKLISEETELPVYRFLSGPLGGDQQIGAKIAEGDLDIVIFFWDPLTAQPHDPDVKALLRIAVLYNVPMACNRSTADYMISSPQFTKTYKKILLSYNTKVKKD.

An MGS-like domain is found at 4 to 148 (VSVPAIKRIV…LSYNTKVKKD (145 aa)). Substrate-binding positions include H17, K21, 43–46 (TGTT), and 63–64 (SG). D69 (proton donor/acceptor) is an active-site residue. Residue H96 coordinates substrate.

This sequence belongs to the methylglyoxal synthase family.

The catalysed reaction is dihydroxyacetone phosphate = methylglyoxal + phosphate. Its function is as follows. Catalyzes the formation of methylglyoxal from dihydroxyacetone phosphate. The sequence is that of Methylglyoxal synthase from Leptospira interrogans serogroup Icterohaemorrhagiae serovar copenhageni (strain Fiocruz L1-130).